Consider the following 402-residue polypeptide: MEGLKTLGPCGHPHPQCPPTPASSSHGGGLDQPCQGFVGWPCLGPISSAHSVQSQRPFPVPGAGGSGPTVEGEAPGLFLSSQEQRARDTEGPRQGDLEAGLGWGWPLHPGSNQGAPRQGGSIGSGTRPCPCPPLSREGGALASPRVALSQLQCGLLGSAEQSFLQLEQENHSLKRQNQELREQLGALLGPGQQFLPLCPEHSSCTALAWPPDPAGTQPLGNRAPLQLLRRELCQGQEAFVQQSQNELQQIRLCFERKKMVITEVWDNVAEMHMALNNQATGLLNLKKDIRGVLDQMEDIQLEILRERAQCRTRARKEKQMASMSKGRPKLGSSKGLAGQLWLLTLRLLLGALLVWTAAYVYVVNPTPFEGLVPPLLSRATVWKLRALLDPFLRLKVDGFLPF.

3 disordered regions span residues 1–30, 50–74, and 108–131; these read MEGL…GGGL, HSVQ…EGEA, and HPGS…PCPC. Residues 154 to 189 are a coiled coil; it reads GLLGSAEQSFLQLEQENHSLKRQNQELREQLGALLG. A helical transmembrane segment spans residues 347-363; the sequence is LLLGALLVWTAAYVYVV.

It is found in the membrane. In Homo sapiens (Human), this protein is Coiled-coil domain-containing protein 188.